The following is a 1363-amino-acid chain: ABC multidrug transporter MDR2 (1363 aa).

Residues 65-85 (IALIVIGTIAGIGAGIPFPLL) traverse the membrane as a helical segment. An ABC transmembrane type-1 1 domain is found at 69 to 367 (VIGTIAGIGA…MAPFMHIFAS (299 aa)). The N-linked (GlcNAc...) asparagine glycan is linked to N97. 5 helical membrane-spanning segments follow: residues 119-139 (VLQV…HTGC), 193-213 (KVGL…VAFL), 215-235 (VATI…MAFG), 301-321 (IQFG…FWQG), and 336-356 (VSVG…FVLS). The ABC transporter 1 domain occupies 403–682 (IELQDVTFNY…DGVYAGMVRL (280 aa)). 438-445 (GTSGSGKS) lines the ATP pocket. Residues N552 and N633 are each glycosylated (N-linked (GlcNAc...) asparagine). A disordered region spans residues 738-758 (YMPEEADSLPTEPENEKEKPK). 3 helical membrane-spanning segments follow: residues 781–801 (LGLI…VIFG), 820–840 (GMLF…AVIV), and 896–916 (LTGT…AGVI). In terms of domain architecture, ABC transmembrane type-1 2 spans 781-1052 (LGLITSIMIG…MFALVPDISK (272 aa)). An N-linked (GlcNAc...) asparagine glycan is attached at N973. Transmembrane regions (helical) follow at residues 992-1012 (FWLS…YWWG) and 1016-1036 (ILAG…LLFS). An ABC transporter 2 domain is found at 1119–1358 (VQFRNVHFRY…CESYRANVIH (240 aa)). Position 1154–1161 (1154–1161 (GPSGSGKS)) interacts with ATP.

It belongs to the ABC transporter superfamily. ABCB family. Multidrug resistance exporter (TC 3.A.1.201) subfamily.

It is found in the cell membrane. Pleiotropic ABC efflux transporter that may be involved in the modulation susceptibility to a wide range of unrelated cytotoxic compounds. This Trichophyton tonsurans (strain CBS 112818) (Scalp ringworm fungus) protein is ABC multidrug transporter MDR2.